The primary structure comprises 198 residues: Recombination protein RecR (198 aa).

The C4-type zinc-finger motif lies at 57 to 72 (CSICGNLTESDPCAIC). Residues 80–175 (TTILVVEESK…KVTRLARGLA (96 aa)) form the Toprim domain.

Belongs to the RecR family.

In terms of biological role, may play a role in DNA repair. It seems to be involved in an RecBC-independent recombinational process of DNA repair. It may act with RecF and RecO. The polypeptide is Recombination protein RecR (Lactococcus lactis subsp. lactis (strain IL1403) (Streptococcus lactis)).